The following is a 108-amino-acid chain: CDGSH iron-sulfur domain-containing protein 1 (108 aa).

The chain crosses the membrane as a helical; Signal-anchor for type III membrane protein span at residues 13-31 (WIAAVTFAAGTAALGYLAY). Residues 32 to 108 (KKFYAKESRT…GPLIIKKKET (77 aa)) are Cytoplasmic-facing. A Glycyl lysine isopeptide (Lys-Gly) (interchain with G-Cter in ubiquitin) cross-link involves residue Lys-42. Lys-55 serves as the catalytic Schiff-base intermediate with pyridoxal 5'-phosphate. N6-acetyllysine; alternate is present on residues Lys-55 and Lys-68. Glycyl lysine isopeptide (Lys-Gly) (interchain with G-Cter in ubiquitin); alternate cross-links involve residues Lys-55 and Lys-68. The [2Fe-2S] cluster site is built by Cys-72 and Cys-74. Residues Lys-78 and Lys-79 each participate in a glycyl lysine isopeptide (Lys-Gly) (interchain with G-Cter in ubiquitin) cross-link. Cys-83 and His-87 together coordinate [2Fe-2S] cluster. Lys-89 participates in a covalent cross-link: Glycyl lysine isopeptide (Lys-Gly) (interchain with G-Cter in ubiquitin). Lys-104 carries the post-translational modification N6-acetyllysine; alternate. Lys-104 is covalently cross-linked (Glycyl lysine isopeptide (Lys-Gly) (interchain with G-Cter in ubiquitin); alternate). Residues Lys-105 and Lys-106 each participate in a glycyl lysine isopeptide (Lys-Gly) (interchain with G-Cter in ubiquitin) cross-link.

The protein belongs to the CISD protein family. Homodimer. The cofactor is [2Fe-2S] cluster. It depends on pyridoxal 5'-phosphate as a cofactor. Ubiquitinated by PRKN during mitophagy, leading to its degradation and enhancement of mitophagy. Deubiquitinated by USP30.

Its subcellular location is the mitochondrion outer membrane. The catalysed reaction is L-cysteine + 2-oxoglutarate = 2-oxo-3-sulfanylpropanoate + L-glutamate. In terms of biological role, L-cysteine transaminase that catalyzes the reversible transfer of the amino group from L-cysteine to the alpha-keto acid 2-oxoglutarate to respectively form 2-oxo-3-sulfanylpropanoate and L-glutamate. The catalytic cycle occurs in the presence of pyridoxal 5'-phosphate (PLP) cofactor that facilitates transamination by initially forming an internal aldimine with the epsilon-amino group of active site Lys-55 residue on the enzyme (PLP-enzyme aldimine), subsequently displaced by formation of an external aldimine with the substrate amino group (PLP-L-cysteine aldimine). The external aldimine is further deprotonated to form a carbanion intermediate, which in the presence of 2-oxoglutarate regenerates PLP yielding final products 2-oxo-3-sulfanylpropanoate and L-glutamate. The proton transfer in carbanion intermediate is suggested to be controlled by the active site lysine residue, whereas PLP stabilizes carbanion structure through electron delocalization, also known as the electron sink effect. Plays a key role in regulating maximal capacity for electron transport and oxidative phosphorylation. May be involved in iron-sulfur cluster shuttling and/or in redox reactions. Can transfer the [2Fe-2S] cluster to an apo-acceptor protein only when in the oxidation state, likely serving as a redox sensor that regulates mitochondrial iron-sulfur cluster assembly and iron trafficking upon oxidative stress. This is CDGSH iron-sulfur domain-containing protein 1 (Cisd1) from Rattus norvegicus (Rat).